The primary structure comprises 176 residues: Large ribosomal subunit protein uL10 (176 aa).

Belongs to the universal ribosomal protein uL10 family. As to quaternary structure, part of the ribosomal stalk of the 50S ribosomal subunit. The N-terminus interacts with L11 and the large rRNA to form the base of the stalk. The C-terminus forms an elongated spine to which L12 dimers bind in a sequential fashion forming a multimeric L10(L12)X complex.

Forms part of the ribosomal stalk, playing a central role in the interaction of the ribosome with GTP-bound translation factors. This Nocardia farcinica (strain IFM 10152) protein is Large ribosomal subunit protein uL10.